The sequence spans 502 residues: Alpha-globin transcription factor CP2 (502 aa).

Positions 61-300 constitute a Grh/CP2 DB domain; it reads ENKILPFQYV…SPGFNSSHSS (240 aa). The segment at 133 to 395 is DNA-binding; it reads EHQQLEGWRW…VRPRLTIYVC (263 aa). Disordered regions lie at residues 238-268 and 294-325; these read FKPKGADRKQKTDREKMEKRTPHEKEKYQPS and FNSSHSSFSLGEGNGSPNHQPEPPPPVTDNLL. A compositionally biased stretch (basic and acidic residues) spans 241–265; sequence KGADRKQKTDREKMEKRTPHEKEKY. Position 353 is a phosphoserine (Ser-353).

It belongs to the grh/CP2 family. CP2 subfamily. As to quaternary structure, binds to DNA as a dimer, isoform 3 does not bind to DNA or affect the binding of isoform 1 to DNA. Interacts with UBP1 and PIAS1, and is probably part of a complex containing TFCP2, UBP1 and PIAS1. Component of the SSP (stage selector protein) complex, which appears to be a heteromer of TFCP2 and 2 copies of NFE4. As to expression, ubiquitous. Expressed in brain, ovary, kidney, thymus, spleen, liver, adrenal, heart and lung (at protein level).

Its subcellular location is the nucleus. Binds a variety of cellular and viral promoters including fibrinogen, alpha-globin, SV40 and HIV-1 promoters. Activation of the alpha-globin promoter in erythroid cells is via synergistic interaction with UBP1. Functions as part of the SSP (stage selector protein) complex. Facilitates the interaction of the gamma-globin genes with enhancer elements contained in the locus control region in fetal erythroid cells. Interacts by binding to the stage selector element (SSE) in the proximal gamma-globin promoter. This is Alpha-globin transcription factor CP2 (TFCP2) from Homo sapiens (Human).